Here is a 154-residue protein sequence, read N- to C-terminus: UPF0178 protein YaiI (154 aa).

Belongs to the UPF0178 family.

This chain is UPF0178 protein YaiI, found in Escherichia fergusonii (strain ATCC 35469 / DSM 13698 / CCUG 18766 / IAM 14443 / JCM 21226 / LMG 7866 / NBRC 102419 / NCTC 12128 / CDC 0568-73).